A 182-amino-acid chain; its full sequence is ADP-ribosylation factor-like protein 3 (182 aa).

The N-myristoyl glycine moiety is linked to residue G2. S5 carries the post-translational modification Phosphoserine. Residues 24–31 (GLDNAGKT), T48, 67–71 (DIGGQ), G70, 126–129 (NKQD), and 159–161 (SAL) contribute to the GTP site. Mg(2+) contacts are provided by T31 and T48.

Belongs to the small GTPase superfamily. Arf family. As to quaternary structure, found in a complex with ARL3, RP2 and UNC119 (or UNC119B); RP2 induces hydrolysis of GTP ARL3 in the complex, leading to the release of UNC119 (or UNC119B). Interacts with RP2; interaction is direct and stimulated with the activated GTP-bound form of ARL3. Interacts with SYS1. Interacts with ARL2BP; the GTP-bound form interacts with ARL2BP. Microtubule-associated protein. Does not interact with TBCC. Interacts with RP2. Interacts with PDE6D; the interaction occurs specifically with the GTP-bound form of ARL3. Interacts with GGA1; the interaction recruits PKD1:PKD2 complex to trans-Golgi network and is required for ciliary targeting of PKD1:PKD2 complex. Interacts with DNAAF9.

It localises to the golgi apparatus membrane. It is found in the cytoplasm. The protein resides in the cytoskeleton. The protein localises to the spindle. Its subcellular location is the nucleus. It localises to the microtubule organizing center. It is found in the centrosome. The protein resides in the cell projection. The protein localises to the cilium. In terms of biological role, small GTP-binding protein which cycles between an inactive GDP-bound and an active GTP-bound form, and the rate of cycling is regulated by guanine nucleotide exchange factors (GEF) and GTPase-activating proteins (GAP). Required for normal cytokinesis and cilia signaling. Requires assistance from GTPase-activating proteins (GAPs) like RP2 and PDE6D, in order to cycle between inactive GDP-bound and active GTP-bound forms. Required for targeting proteins to the cilium, including myristoylated NPHP3 and prenylated INPP5E. Targets NPHP3 to the ciliary membrane by releasing myristoylated NPHP3 from UNC119B cargo adapter into the cilium. Required for PKD1:PKD2 complex targeting from the trans-Golgi network to the cilium. The protein is ADP-ribosylation factor-like protein 3 (ARL3) of Sus scrofa (Pig).